The sequence spans 81 residues: Protein Vpu (81 aa).

Topologically, residues 1 to 7 are extracellular; sequence MQPLVII. A helical membrane pass occupies residues 8–28; it reads AIAALVVAIIIAIVVWTIVYI. Topologically, residues 29 to 81 are cytoplasmic; that stretch reads EYRRIKRQRKIDCLIDRIRERAEDSGNESEGEREELSKLVEMGHHAPWDVDDL. The interval 50–81 is disordered; it reads AEDSGNESEGEREELSKLVEMGHHAPWDVDDL. Residues Ser-53 and Ser-57 each carry the phosphoserine; by host CK2 modification. The span at 62-81 shows a compositional bias: basic and acidic residues; sequence EELSKLVEMGHHAPWDVDDL.

Belongs to the HIV-1 VPU protein family. As to quaternary structure, homopentamer. Interacts with host CD4 and BRTC; these interactions induce proteasomal degradation of CD4. Interacts with host BST2; this interaction leads to the degradation of host BST2. Interacts with host FBXW11. Interacts with host AP1M1; this interaction plays a role in the mistrafficking and subsequent degradation of host BST2. Interacts with host RANBP2; this interaction allows Vpu to down-regulate host BLM sumoylation. Post-translationally, phosphorylated by host CK2. This phosphorylation is necessary for interaction with human BTRC and degradation of CD4.

Its subcellular location is the host membrane. Ion channel activity is inhibited by hexamethylene amiloride in vitro. Enhances virion budding by targeting host CD4 and Tetherin/BST2 to proteasome degradation. Degradation of CD4 prevents any unwanted premature interactions between viral Env and its host receptor CD4 in the endoplasmic reticulum. Degradation of antiretroviral protein Tetherin/BST2 is important for virion budding, as BST2 tethers new viral particles to the host cell membrane. Mechanistically, Vpu bridges either CD4 or BST2 to BTRC, a substrate recognition subunit of the Skp1/Cullin/F-box protein E3 ubiquitin ligase, induces their ubiquitination and subsequent proteasomal degradation. The alteration of the E3 ligase specificity by Vpu seems to promote the degradation of host IKBKB, leading to NF-kappa-B down-regulation and subsequent apoptosis. Acts as a viroporin that forms an oligomeric ion channel in membranes. Modulates the host DNA repair mechanisms to promote degradation of nuclear viral cDNA in cells that are already productively infected in order to suppress immune sensing and proviral hyper-integration (superinfection). Manipulates PML-NBs and modulates SUMOylation of host BLM protein thereby enhancing its DNA-end processing activity toward viral unintegrated linear DNA. Also inhibits RAD52-mediated homologous repair of viral cDNA, preventing the generation of dead-end circular forms of single copies of the long terminal repeat and permitting sustained nucleolytic attack. The protein is Protein Vpu of Human immunodeficiency virus type 1 group M subtype D (isolate NDK) (HIV-1).